Reading from the N-terminus, the 258-residue chain is MSLIDPRAIIDPTVILADNVEVGPWSIIGAGVEIGEGTVVGPHVVLKGPTRIGKHNRIYQFSSVGEDTPDLKYKGEETRLVIGDHNVIREGVTIHRGTVQDRAETTLGDHNLIMAYAHIGHDSVIGNHVILVNNTALAGHVHVDDWAILSGFTLVHQFCHIGAHSFSGMGTAIGKDVPAFVTVFGNPAEARSMNFEGMRRRGFSEEAIHALRRAYKTVYRQGLTIAQAAADLAEPAAQFPEVAVFLQSIQTSTRGIIR.

Belongs to the transferase hexapeptide repeat family. LpxA subfamily. In terms of assembly, homotrimer.

The protein localises to the cytoplasm. It carries out the reaction a (3R)-hydroxyacyl-[ACP] + UDP-N-acetyl-alpha-D-glucosamine = a UDP-3-O-[(3R)-3-hydroxyacyl]-N-acetyl-alpha-D-glucosamine + holo-[ACP]. Its pathway is glycolipid biosynthesis; lipid IV(A) biosynthesis; lipid IV(A) from (3R)-3-hydroxytetradecanoyl-[acyl-carrier-protein] and UDP-N-acetyl-alpha-D-glucosamine: step 1/6. Functionally, involved in the biosynthesis of lipid A, a phosphorylated glycolipid that anchors the lipopolysaccharide to the outer membrane of the cell. In Pseudomonas savastanoi pv. phaseolicola (strain 1448A / Race 6) (Pseudomonas syringae pv. phaseolicola (strain 1448A / Race 6)), this protein is Acyl-[acyl-carrier-protein]--UDP-N-acetylglucosamine O-acyltransferase.